Consider the following 423-residue polypeptide: UPF0597 protein Emin_0811 (423 aa).

This sequence belongs to the UPF0597 family.

The chain is UPF0597 protein Emin_0811 from Elusimicrobium minutum (strain Pei191).